The following is a 439-amino-acid chain: Glycosyl hydrolase DigH (439 aa).

Positions 1-27 (MDICSRNKKLTIRRPAILVALALLLCS) are cleaved as a signal peptide. Cysteine 28 carries N-palmitoyl cysteine lipidation. Residue cysteine 28 is the site of S-diacylglycerol cysteine attachment. The disordered stretch occupies residues 34–54 (ESMVTPPAGSKPPATTQQSSQ).

This sequence belongs to the glycosyl hydrolase-like 10 (GHL10) family.

Its subcellular location is the cell outer membrane. In terms of biological role, divisome-localized glycosyl hydrolase that cleaves peptide-free (denuded) peptidoglycans. The protein is Glycosyl hydrolase DigH of Escherichia coli O157:H7.